Consider the following 491-residue polypeptide: MNTQQLAKLRTIVPEMRRVRHIHFVGIGGAGMGGIAEVLANEGYQISGSDLAPNSVTQHLTALGAQIYFHHRPENVLDASVVVVSTAISADNPEIVAAREARIPVIRRAEMLAELMRYRHGIAVAGTHGKTTTTAMLSSIYAEAGLDPTFVNGGLVKAAGTHARLGSSRYLIAEADESDASFLHLQPMVAIVTNIEADHMDTYQGDFENLKQTFINFLHNLPFYGRAVMCIDDPVVRELLPRVGRHITTYGFSDDADVQIASYRQEGPQGHFTLRRQDKPLIEVTLNAPGRHNALNAAAAVAVATEEGIEDEDILRALVGFQGTGRRFDFLGNFPLAPVNGKEGSAMLVDDYGHHPTEVDATIKAARAGWPDKRIVMLFQPHRYTRTRDLYDDFANVLSQVDVLLMLDVYAAGEPPIPGADSRALCRTIRNRGKLDPILVPDSESAPEMLAQILNGEDLILVQGAGNIGKIARKLAEHKLQPQLKDEEHHG.

126–132 (GTHGKTT) provides a ligand contact to ATP.

It belongs to the MurCDEF family.

The protein localises to the cytoplasm. The enzyme catalyses UDP-N-acetyl-alpha-D-muramate + L-alanine + ATP = UDP-N-acetyl-alpha-D-muramoyl-L-alanine + ADP + phosphate + H(+). The protein operates within cell wall biogenesis; peptidoglycan biosynthesis. Functionally, cell wall formation. This Yersinia pestis (strain Pestoides F) protein is UDP-N-acetylmuramate--L-alanine ligase.